The sequence spans 149 residues: Ribosomal RNA large subunit methyltransferase H (149 aa).

Residues Leu71, Gly98, and 117–122 (LSKMTL) contribute to the S-adenosyl-L-methionine site.

The protein belongs to the RNA methyltransferase RlmH family. In terms of assembly, homodimer.

The protein localises to the cytoplasm. The enzyme catalyses pseudouridine(1915) in 23S rRNA + S-adenosyl-L-methionine = N(3)-methylpseudouridine(1915) in 23S rRNA + S-adenosyl-L-homocysteine + H(+). In terms of biological role, specifically methylates the pseudouridine at position 1915 (m3Psi1915) in 23S rRNA. The chain is Ribosomal RNA large subunit methyltransferase H from Campylobacter fetus subsp. fetus (strain 82-40).